Here is a 434-residue protein sequence, read N- to C-terminus: Monodehydroascorbate reductase, seedling isozyme (434 aa).

FAD contacts are provided by residues glycine 13–alanine 16, glutamate 40, arginine 47, lysine 52, isoleucine 95, and arginine 146–glutamate 147. Residues glycine 171–glutamate 177, glutamate 195, arginine 201, and glycine 260 each bind NAD(+). Tyrosine 173–glutamate 177 contacts NADP(+). Residues arginine 201 and glycine 260 each coordinate NADP(+). Aspartate 297 serves as a coordination point for FAD. Glutamate 313–histidine 314 lines the NAD(+) pocket. An NADP(+)-binding site is contributed by glutamate 313–histidine 314. Valine 315 serves as a coordination point for FAD. Arginine 319 contacts L-ascorbate. FAD is bound at residue tyrosine 348. Tyrosine 348 contributes to the NAD(+) binding site. An NADP(+)-binding site is contributed by tyrosine 348. Arginine 350 is a binding site for L-ascorbate.

This sequence belongs to the FAD-dependent oxidoreductase family. FAD is required as a cofactor.

It is found in the cytoplasm. It catalyses the reaction 2 monodehydro-L-ascorbate radical + NADH + H(+) = 2 L-ascorbate + NAD(+). Catalyzes the conversion of monodehydroascorbate to ascorbate, oxidizing NADH in the process. This Cucumis sativus (Cucumber) protein is Monodehydroascorbate reductase, seedling isozyme.